Reading from the N-terminus, the 450-residue chain is Bifunctional protein GlmU (450 aa).

The tract at residues 1-226 (MLAVAVLAAG…PDEVNGINNR (226 aa)) is pyrophosphorylase. UDP-N-acetyl-alpha-D-glucosamine-binding positions include 7–10 (LAAG), Lys-21, Gln-73, and 78–79 (GT). Position 103 (Asp-103) interacts with Mg(2+). 4 residues coordinate UDP-N-acetyl-alpha-D-glucosamine: Gly-140, Glu-155, Asn-170, and Asn-224. Asn-224 serves as a coordination point for Mg(2+). The tract at residues 227–247 (QQLAQCETMLQERLRHHWMAE) is linker. The tract at residues 248-450 (GVTFVDPASC…IKENWAGPQG (203 aa)) is N-acetyltransferase. Residues Arg-329 and Lys-347 each coordinate UDP-N-acetyl-alpha-D-glucosamine. His-359 acts as the Proton acceptor in catalysis. Residues Tyr-362 and Asn-373 each coordinate UDP-N-acetyl-alpha-D-glucosamine. Residues Ala-376, 382 to 383 (NY), Ala-419, and Arg-436 each bind acetyl-CoA.

In the N-terminal section; belongs to the N-acetylglucosamine-1-phosphate uridyltransferase family. It in the C-terminal section; belongs to the transferase hexapeptide repeat family. As to quaternary structure, homotrimer. The cofactor is Mg(2+).

Its subcellular location is the cytoplasm. It carries out the reaction alpha-D-glucosamine 1-phosphate + acetyl-CoA = N-acetyl-alpha-D-glucosamine 1-phosphate + CoA + H(+). The enzyme catalyses N-acetyl-alpha-D-glucosamine 1-phosphate + UTP + H(+) = UDP-N-acetyl-alpha-D-glucosamine + diphosphate. It functions in the pathway nucleotide-sugar biosynthesis; UDP-N-acetyl-alpha-D-glucosamine biosynthesis; N-acetyl-alpha-D-glucosamine 1-phosphate from alpha-D-glucosamine 6-phosphate (route II): step 2/2. Its pathway is nucleotide-sugar biosynthesis; UDP-N-acetyl-alpha-D-glucosamine biosynthesis; UDP-N-acetyl-alpha-D-glucosamine from N-acetyl-alpha-D-glucosamine 1-phosphate: step 1/1. The protein operates within bacterial outer membrane biogenesis; LPS lipid A biosynthesis. In terms of biological role, catalyzes the last two sequential reactions in the de novo biosynthetic pathway for UDP-N-acetylglucosamine (UDP-GlcNAc). The C-terminal domain catalyzes the transfer of acetyl group from acetyl coenzyme A to glucosamine-1-phosphate (GlcN-1-P) to produce N-acetylglucosamine-1-phosphate (GlcNAc-1-P), which is converted into UDP-GlcNAc by the transfer of uridine 5-monophosphate (from uridine 5-triphosphate), a reaction catalyzed by the N-terminal domain. In Synechococcus sp. (strain RCC307), this protein is Bifunctional protein GlmU.